A 283-amino-acid chain; its full sequence is ATP phosphoribosyltransferase (283 aa).

Belongs to the ATP phosphoribosyltransferase family. Long subfamily. It depends on Mg(2+) as a cofactor.

It is found in the cytoplasm. The enzyme catalyses 1-(5-phospho-beta-D-ribosyl)-ATP + diphosphate = 5-phospho-alpha-D-ribose 1-diphosphate + ATP. Its pathway is amino-acid biosynthesis; L-histidine biosynthesis; L-histidine from 5-phospho-alpha-D-ribose 1-diphosphate: step 1/9. Feedback inhibited by histidine. In terms of biological role, catalyzes the condensation of ATP and 5-phosphoribose 1-diphosphate to form N'-(5'-phosphoribosyl)-ATP (PR-ATP). Has a crucial role in the pathway because the rate of histidine biosynthesis seems to be controlled primarily by regulation of HisG enzymatic activity. The sequence is that of ATP phosphoribosyltransferase from Bacteroides thetaiotaomicron (strain ATCC 29148 / DSM 2079 / JCM 5827 / CCUG 10774 / NCTC 10582 / VPI-5482 / E50).